The primary structure comprises 655 residues: Very long-chain specific acyl-CoA dehydrogenase, mitochondrial (655 aa).

Residues Met1–Tyr40 constitute a mitochondrion transit peptide. Positions Arg23–Gly42 are disordered. Residues Ala41–Lys482 form a catalytic region. Lys51 is subject to N6-acetyllysine. Lys71 is subject to N6-acetyllysine; alternate. N6-succinyllysine; alternate is present on Lys71. Lys195 carries the N6-succinyllysine modification. Phe214–Ser223 contacts FAD. Cys237 carries the post-translational modification S-nitrosocysteine. Lys239 is subject to N6-acetyllysine; alternate. Residue Lys239 is modified to N6-succinyllysine; alternate. Residue Trp249–Ser251 coordinates FAD. Lys276 and Lys278 each carry N6-acetyllysine; alternate. 2 positions are modified to N6-succinyllysine; alternate: Lys276 and Lys278. Lys298 carries the post-translational modification N6-acetyllysine. Lys331 carries the N6-acetyllysine; alternate modification. At Lys331 the chain carries N6-succinyllysine; alternate. At Lys372 the chain carries N6-succinyllysine. Phe461 to Gly463 contacts substrate. The active-site Proton acceptor is Glu462. Thr464 to Asp466 is a binding site for FAD. Lys482 bears the N6-acetyllysine; alternate mark. Lys482 is subject to N6-succinyllysine; alternate. Residues Glu483–Gly516 form a membrane-anchoring region. A phosphoserine mark is found at Ser517 and Ser522. The residue at position 550 (Lys550) is an N6-acetyllysine. N6-acetyllysine; alternate is present on Lys556. Lys556 is modified (N6-succinyllysine; alternate). Position 562 (Gln562) interacts with FAD. The residue at position 639 (Lys639) is an N6-succinyllysine.

This sequence belongs to the acyl-CoA dehydrogenase family. In terms of assembly, homodimer. Homodimerizes after import into the mitochondrion. FAD is required as a cofactor. In terms of processing, S-nitrosylation at Cys-237 in liver improves catalytic efficiency. Predominantly expressed in heart and skeletal muscle (at protein level). Also detected in kidney and liver (at protein level).

The protein localises to the mitochondrion inner membrane. It carries out the reaction a very-long-chain 2,3-saturated fatty acyl-CoA + oxidized [electron-transfer flavoprotein] + H(+) = a very-long-chain (2E)-enoyl-CoA + reduced [electron-transfer flavoprotein]. It catalyses the reaction decanoyl-CoA + oxidized [electron-transfer flavoprotein] + H(+) = (2E)-decenoyl-CoA + reduced [electron-transfer flavoprotein]. The catalysed reaction is dodecanoyl-CoA + oxidized [electron-transfer flavoprotein] + H(+) = (2E)-dodecenoyl-CoA + reduced [electron-transfer flavoprotein]. The enzyme catalyses tetradecanoyl-CoA + oxidized [electron-transfer flavoprotein] + H(+) = (2E)-tetradecenoyl-CoA + reduced [electron-transfer flavoprotein]. It carries out the reaction oxidized [electron-transfer flavoprotein] + hexadecanoyl-CoA + H(+) = (2E)-hexadecenoyl-CoA + reduced [electron-transfer flavoprotein]. It catalyses the reaction octadecanoyl-CoA + oxidized [electron-transfer flavoprotein] + H(+) = (2E)-octadecenoyl-CoA + reduced [electron-transfer flavoprotein]. The catalysed reaction is eicosanoyl-CoA + oxidized [electron-transfer flavoprotein] + H(+) = (2E)-eicosenoyl-CoA + reduced [electron-transfer flavoprotein]. The enzyme catalyses docosanoyl-CoA + oxidized [electron-transfer flavoprotein] + H(+) = (2E)-docosenoyl-CoA + reduced [electron-transfer flavoprotein]. It carries out the reaction tetracosanoyl-CoA + oxidized [electron-transfer flavoprotein] + H(+) = (2E)-tetracosenoyl-CoA + reduced [electron-transfer flavoprotein]. It catalyses the reaction (9Z)-hexadecenoyl-CoA + oxidized [electron-transfer flavoprotein] + H(+) = (2E,9Z)-hexadecadienoyl-CoA + reduced [electron-transfer flavoprotein]. The catalysed reaction is oxidized [electron-transfer flavoprotein] + (9Z)-octadecenoyl-CoA + H(+) = (2E,9Z)-octadecadienoyl-CoA + reduced [electron-transfer flavoprotein]. Its pathway is lipid metabolism; mitochondrial fatty acid beta-oxidation. In terms of biological role, very long-chain specific acyl-CoA dehydrogenase is one of the acyl-CoA dehydrogenases that catalyze the first step of mitochondrial fatty acid beta-oxidation, an aerobic process breaking down fatty acids into acetyl-CoA and allowing the production of energy from fats. The first step of fatty acid beta-oxidation consists in the removal of one hydrogen from C-2 and C-3 of the straight-chain fatty acyl-CoA thioester, resulting in the formation of trans-2-enoyl-CoA. Among the different mitochondrial acyl-CoA dehydrogenases, very long-chain specific acyl-CoA dehydrogenase acts specifically on acyl-CoAs with saturated 12 to 24 carbons long primary chains. The polypeptide is Very long-chain specific acyl-CoA dehydrogenase, mitochondrial (Homo sapiens (Human)).